Consider the following 38-residue polypeptide: Photosystem II reaction center protein L (38 aa).

Residues 17–37 traverse the membrane as a helical segment; sequence SLYWGLLLIFVLAVPFSNYFF.

Belongs to the PsbL family. As to quaternary structure, PSII is composed of 1 copy each of membrane proteins PsbA, PsbB, PsbC, PsbD, PsbE, PsbF, PsbH, PsbI, PsbJ, PsbK, PsbL, PsbM, PsbT, PsbX, PsbY, PsbZ, Psb30/Ycf12, at least 3 peripheral proteins of the oxygen-evolving complex and a large number of cofactors. It forms dimeric complexes.

The protein localises to the plastid. It localises to the chloroplast thylakoid membrane. Its function is as follows. One of the components of the core complex of photosystem II (PSII). PSII is a light-driven water:plastoquinone oxidoreductase that uses light energy to abstract electrons from H(2)O, generating O(2) and a proton gradient subsequently used for ATP formation. It consists of a core antenna complex that captures photons, and an electron transfer chain that converts photonic excitation into a charge separation. This subunit is found at the monomer-monomer interface and is required for correct PSII assembly and/or dimerization. This is Photosystem II reaction center protein L from Pinus thunbergii (Japanese black pine).